The following is a 353-amino-acid chain: Rhodopsin (353 aa).

At 1-36 (MNGTEGPFFYVPMVNTTGIVRSPYEYPQYYLVNPAA) the chain is on the extracellular side. N-linked (GlcNAc...) asparagine glycosylation is found at Asn2 and Asn15. A helical membrane pass occupies residues 37-61 (YAALGAYMFLLILVGFPINFLTLYV). At 62-73 (TIEHKKLRTPLN) the chain is on the cytoplasmic side. Residues 74–96 (YILLNLAVADLFMVLGGFTTTMY) traverse the membrane as a helical segment. Residues 97–110 (TSMHGYFVLGRLGC) are Extracellular-facing. A disulfide bond links Cys110 and Cys187. Residues 111–133 (NIEGFFATLGGEIALWSLVVLAI) form a helical membrane-spanning segment. The 'Ionic lock' involved in activated form stabilization signature appears at 134-136 (ERW). Residues 134–152 (ERWVVVCKPISNFRFGENH) are Cytoplasmic-facing. Residues 153–173 (AIMGLAFTWTMAMACAAPPLV) form a helical membrane-spanning segment. The Extracellular portion of the chain corresponds to 174–202 (GWSRYIPEGMQCSCGIDYYTRAEGFNNES). Asn200 is a glycosylation site (N-linked (GlcNAc...) asparagine). The helical transmembrane segment at 203-224 (FVIYMFICHFTIPLTVVFFCYG) threads the bilayer. Over 225–252 (RLLCAVKEAAAAQQESETTQRAEKEVTR) the chain is Cytoplasmic. The chain crosses the membrane as a helical span at residues 253 to 274 (MVIMMVIAFLVCWLPYASVAWY). At 275–286 (IFTHQGSEFGPV) the chain is on the extracellular side. A helical membrane pass occupies residues 287–308 (FMTIPAFFAKSSSIYNPMIYIC). Position 296 is an N6-(retinylidene)lysine (Lys296). The Cytoplasmic portion of the chain corresponds to 309 to 353 (LNKQFRHCMITTLCCGKNPFEEEEGASTASKTEASSVSSSSVSPA). Residues Cys322 and Cys323 are each lipidated (S-palmitoyl cysteine). Positions 331-353 (EEGASTASKTEASSVSSSSVSPA) are disordered. Positions 334–353 (ASTASKTEASSVSSSSVSPA) are enriched in low complexity.

It belongs to the G-protein coupled receptor 1 family. Opsin subfamily. Post-translationally, phosphorylated on some or all of the serine and threonine residues present in the C-terminal region. Contains one covalently linked retinal chromophore.

It is found in the membrane. Its subcellular location is the cell projection. It localises to the cilium. The protein localises to the photoreceptor outer segment. Photoreceptor required for image-forming vision at low light intensity. While most salt water fish species use retinal as chromophore, most freshwater fish use 3-dehydroretinal, or a mixture of retinal and 3-dehydroretinal. Light-induced isomerization of 11-cis to all-trans retinal triggers a conformational change that activates signaling via G-proteins. Subsequent receptor phosphorylation mediates displacement of the bound G-protein alpha subunit by arrestin and terminates signaling. In Diplodus annularis (Annular seabream), this protein is Rhodopsin (rho).